The primary structure comprises 344 residues: MKKIVTLAGDGIGPEIMAAGLEVFDAVAQKINFDYEIEAKAFGGAGIDASGHPLPDDTLAAAKTADAILLAAIGSPQYDKAPVRPEQGLLAIRKELNLFANIRPVRIFDALRHLSPLKAERIAGVDFVVVRELTGGIYFGQHTLTENSACDINEYSASEIRRIMRKAFAIARGRSKKVTSIDKQNVLATSKLWRQIAEEVAKEYSDVTLEHQLVDSAAMVMITNPACFDVVVTENLFGDILSDESSVLPGTLGVMPSASHSESGPSLYEPIHGSAPDIAGKGIANPISMILSVAMMLRDSFGETAGAEMIEHAVNKTLTQGILTRDLGGLANTKQMTAAIIANL.

Residues arginine 93, arginine 103, arginine 131, and aspartate 215 each contribute to the substrate site. 3 residues coordinate Mg(2+): aspartate 215, aspartate 239, and aspartate 243. An NAD(+)-binding site is contributed by glycine 273–asparagine 285.

This sequence belongs to the isocitrate and isopropylmalate dehydrogenases family. LeuB type 1 subfamily. Homodimer. Requires Mg(2+) as cofactor. Mn(2+) serves as cofactor.

Its subcellular location is the cytoplasm. It carries out the reaction (2R,3S)-3-isopropylmalate + NAD(+) = 4-methyl-2-oxopentanoate + CO2 + NADH. The protein operates within amino-acid biosynthesis; L-leucine biosynthesis; L-leucine from 3-methyl-2-oxobutanoate: step 3/4. Catalyzes the oxidation of 3-carboxy-2-hydroxy-4-methylpentanoate (3-isopropylmalate) to 3-carboxy-4-methyl-2-oxopentanoate. The product decarboxylates to 4-methyl-2 oxopentanoate. The sequence is that of 3-isopropylmalate dehydrogenase from Streptococcus mutans serotype c (strain ATCC 700610 / UA159).